We begin with the raw amino-acid sequence, 27 residues long: Pregnancy-associated glycoprotein 55 (27 aa).

This sequence belongs to the peptidase A1 family. Post-translationally, glycosylated. Placenta.

This is Pregnancy-associated glycoprotein 55 (PAG55) from Capra hircus (Goat).